The following is a 90-amino-acid chain: Large ribosomal subunit protein bL27 (90 aa).

Positions 1–13 (MATKKSGGSSSNG) are enriched in low complexity. Residues 1 to 20 (MATKKSGGSSSNGRDSRGRR) are disordered.

The protein belongs to the bacterial ribosomal protein bL27 family.

This chain is Large ribosomal subunit protein bL27, found in Anaplasma marginale (strain Florida).